The sequence spans 439 residues: Ribosomal protein uS12 methylthiotransferase RimO (439 aa).

Residues Q7–F122 form the MTTase N-terminal domain. C16, C52, C85, C155, C159, and C162 together coordinate [4Fe-4S] cluster. The 229-residue stretch at S141–K369 folds into the Radical SAM core domain.

This sequence belongs to the methylthiotransferase family. RimO subfamily. It depends on [4Fe-4S] cluster as a cofactor.

The protein resides in the cytoplasm. The enzyme catalyses L-aspartate(89)-[ribosomal protein uS12]-hydrogen + (sulfur carrier)-SH + AH2 + 2 S-adenosyl-L-methionine = 3-methylsulfanyl-L-aspartate(89)-[ribosomal protein uS12]-hydrogen + (sulfur carrier)-H + 5'-deoxyadenosine + L-methionine + A + S-adenosyl-L-homocysteine + 2 H(+). Catalyzes the methylthiolation of an aspartic acid residue of ribosomal protein uS12. The protein is Ribosomal protein uS12 methylthiotransferase RimO of Endomicrobium trichonymphae.